A 158-amino-acid chain; its full sequence is SsrA-binding protein (158 aa).

This sequence belongs to the SmpB family.

Its subcellular location is the cytoplasm. In terms of biological role, required for rescue of stalled ribosomes mediated by trans-translation. Binds to transfer-messenger RNA (tmRNA), required for stable association of tmRNA with ribosomes. tmRNA and SmpB together mimic tRNA shape, replacing the anticodon stem-loop with SmpB. tmRNA is encoded by the ssrA gene; the 2 termini fold to resemble tRNA(Ala) and it encodes a 'tag peptide', a short internal open reading frame. During trans-translation Ala-aminoacylated tmRNA acts like a tRNA, entering the A-site of stalled ribosomes, displacing the stalled mRNA. The ribosome then switches to translate the ORF on the tmRNA; the nascent peptide is terminated with the 'tag peptide' encoded by the tmRNA and targeted for degradation. The ribosome is freed to recommence translation, which seems to be the essential function of trans-translation. The protein is SsrA-binding protein of Caldanaerobacter subterraneus subsp. tengcongensis (strain DSM 15242 / JCM 11007 / NBRC 100824 / MB4) (Thermoanaerobacter tengcongensis).